Here is a 400-residue protein sequence, read N- to C-terminus: MPEQPLPTLPMWRVDHIEPSPTMLALRANGPIHNVRFPRGHEGWWVTGYDEAKAVLSDAAFRPAGMPPAAFTPDCVILGSPGWLVSHEGGEHARLRTIVAPAFSDRRVKLLAQQVEAIAAQLFETLAAQPQPADLRRHLSFPLPAMVISALMGVLYEDHAFFAGLSDEVMTHQHESGPRSASRLAWEELRAYIRGKMRDKRQDPGDNLLTDLLAAVDRGEATEEEAIGLAAGMLVAGHESTVAQIEFGLLAMLRHPQQRERLVGNPSLVDKAVEEILRMYPPGAGWDGIMRYPRTDVTIAGVHIPAESKVLVGLPATSFDPRHFEDPEIFDIGRDAKPHLAFSYGPHYCIGMALARLELKVVFGSIFQRFPALRLAVAPEELKLRKEIITGGFEEFPVLW.

Cys-349 contacts heme.

It belongs to the cytochrome P450 family. It depends on heme as a cofactor.

In terms of biological role, cytochromes P450 are a group of heme-thiolate monooxygenases. They oxidize a variety of structurally unrelated compounds, including steroids, fatty acids, and xenobiotics. The protein is Cytochrome P450 BJ-1 homolog (cyp112A2) of Sinorhizobium fredii (strain NBRC 101917 / NGR234).